The sequence spans 141 residues: VLSASDKTNLKAAWDKLGGQAANYGAEALERTFASFPTTKTYFPHFDLSPGSAQVKGHGKKVADALTKAVGSLDDLPGALSALSDLHAHKLRVDPVNFKLLSHCLLVTLASHHPADFTPAVHASLDKFLATVSTVLTSKYR.

The Globin domain occupies 1-141 (VLSASDKTNL…VSTVLTSKYR (141 aa)). Position 3 is a phosphoserine (serine 3). The residue at position 7 (lysine 7) is an N6-succinyllysine. Threonine 8 bears the Phosphothreonine mark. N6-succinyllysine is present on lysine 11. N6-acetyllysine; alternate is present on lysine 16. An N6-succinyllysine; alternate modification is found at lysine 16. Residue tyrosine 24 is modified to Phosphotyrosine. Serine 35 bears the Phosphoserine mark. The residue at position 40 (lysine 40) is an N6-succinyllysine. Serine 49 bears the Phosphoserine mark. Histidine 58 serves as a coordination point for O2. Histidine 87 lines the heme b pocket. Serine 102 is modified (phosphoserine). Residue threonine 108 is modified to Phosphothreonine. Serine 124 bears the Phosphoserine mark. Phosphothreonine is present on residues threonine 134 and threonine 137. Serine 138 carries the phosphoserine modification.

This sequence belongs to the globin family. As to quaternary structure, heterotetramer of two alpha chains and two beta chains. Red blood cells.

In terms of biological role, involved in oxygen transport from the lung to the various peripheral tissues. The polypeptide is Hemoglobin subunit alpha (Blarina brevicauda (Northern short-tailed shrew)).